We begin with the raw amino-acid sequence, 161 residues long: Protein-export protein SecB (161 aa).

The protein belongs to the SecB family. As to quaternary structure, homotetramer, a dimer of dimers. One homotetramer interacts with 1 SecA dimer.

It localises to the cytoplasm. Its function is as follows. One of the proteins required for the normal export of preproteins out of the cell cytoplasm. It is a molecular chaperone that binds to a subset of precursor proteins, maintaining them in a translocation-competent state. It also specifically binds to its receptor SecA. This chain is Protein-export protein SecB, found in Shewanella putrefaciens (strain CN-32 / ATCC BAA-453).